The sequence spans 318 residues: Acetyl-coenzyme A carboxylase carboxyl transferase subunit alpha (318 aa).

The CoA carboxyltransferase C-terminal domain maps to 34–295; the sequence is SIEEEITKLR…KATIKQQLAQ (262 aa).

Belongs to the AccA family. Acetyl-CoA carboxylase is a heterohexamer composed of biotin carboxyl carrier protein (AccB), biotin carboxylase (AccC) and two subunits each of ACCase subunit alpha (AccA) and ACCase subunit beta (AccD).

Its subcellular location is the cytoplasm. It catalyses the reaction N(6)-carboxybiotinyl-L-lysyl-[protein] + acetyl-CoA = N(6)-biotinyl-L-lysyl-[protein] + malonyl-CoA. It participates in lipid metabolism; malonyl-CoA biosynthesis; malonyl-CoA from acetyl-CoA: step 1/1. Functionally, component of the acetyl coenzyme A carboxylase (ACC) complex. First, biotin carboxylase catalyzes the carboxylation of biotin on its carrier protein (BCCP) and then the CO(2) group is transferred by the carboxyltransferase to acetyl-CoA to form malonyl-CoA. The polypeptide is Acetyl-coenzyme A carboxylase carboxyl transferase subunit alpha (Pseudoalteromonas atlantica (strain T6c / ATCC BAA-1087)).